The primary structure comprises 242 residues: ATP synthase subunit a (242 aa).

A run of 6 helical transmembrane segments spans residues 29-49 (SSIYMLLASILALTYFYLAFY), 84-104 (FIPLVFSLFIFVLFSNLLGMT), 114-134 (IIVTFTLAIIVFLTVTIVGFV), 140-160 (FLTLFLPYGTPLWLAPLMIVI), 181-201 (MAGHVLLKVIAGFTVSLMIYL), and 203-223 (FLPIPIIVILIGFEIFVAILQ).

Belongs to the ATPase A chain family. As to quaternary structure, F-type ATPases have 2 components, CF(1) - the catalytic core - and CF(0) - the membrane proton channel. CF(1) has five subunits: alpha(3), beta(3), gamma(1), delta(1), epsilon(1). CF(0) has three main subunits: a(1), b(2) and c(9-12). The alpha and beta chains form an alternating ring which encloses part of the gamma chain. CF(1) is attached to CF(0) by a central stalk formed by the gamma and epsilon chains, while a peripheral stalk is formed by the delta and b chains.

The protein localises to the cell inner membrane. Key component of the proton channel; it plays a direct role in the translocation of protons across the membrane. The protein is ATP synthase subunit a of Rickettsia akari (strain Hartford).